The primary structure comprises 159 residues: Cytochrome c-type biogenesis protein CcmE (159 aa).

The Cytoplasmic portion of the chain corresponds to 1-7; it reads MTPRQRR. The helical; Signal-anchor for type II membrane protein transmembrane segment at 8-28 threads the bilayer; that stretch reads LGMLLAALACAGIALALVLNA. Residues 29-159 lie on the Periplasmic side of the membrane; sequence FRSNLVFFFS…LAEGERETQR (131 aa). Heme contacts are provided by His-123 and Tyr-127.

This sequence belongs to the CcmE/CycJ family.

Its subcellular location is the cell inner membrane. Heme chaperone required for the biogenesis of c-type cytochromes. Transiently binds heme delivered by CcmC and transfers the heme to apo-cytochromes in a process facilitated by CcmF and CcmH. The protein is Cytochrome c-type biogenesis protein CcmE of Cupriavidus pinatubonensis (strain JMP 134 / LMG 1197) (Cupriavidus necator (strain JMP 134)).